The sequence spans 500 residues: MHFISCCLRRSTVSIAVSRSLLVKRLFCSGWPGDDTIYSLSSGQGKCGVAVVRVSGPASALAVRRLTRSLPAPRTASLRSISHPQSKELLDRGLVLWFPGPASFTGEDSAEFHIHGGPAVISGVLQALGSLPGLRPAEAGEFTRRAFYAGKLDLTEVEGLSDLIHAETEAQRRQALRQMAGDLGRIYQDWTDQLKRCLAHVEAFIDFSEDELIEDGVLNDVDRAVQQLQTDMENHLSDERRGERLRSGVHVVIAGSTNAGKSSLLNLLTQRPAAIVSPTAGTTRDVLEVPLDIGGYPVLLSDTAGLRDTSDSVEQEGVRRARQRVEQADLSLVVVDLTQLPSERRHVPVFLRGHLKNILERSSQQQQHILILNESDLVSAEQQRSIQTSLQELSGAPSACFLSCHSRDGLEELLTLLHNTLKTLCGDPLIGSPTLTQTRHRTHLQKSIEALQQYHEYRDVDLALAAEGLRLGLLSLGRITGRVSPEEILDVIFRDFCIGK.

Residues 1–73 (MHFISCCLRR…RRLTRSLPAP (73 aa)) constitute a mitochondrion transit peptide. 5,10-methylenetetrahydrofolate contacts are provided by R53, E111, and K151. Residues 248–422 (GVHVVIAGST…LLTLLHNTLK (175 aa)) enclose the TrmE-type G domain. GTP-binding positions include 255-262 (GSTNAGKS), 281-285 (GTTRD), 302-305 (DTAG), and 373-376 (NESD). N258 contributes to the K(+) binding site. 2 residues coordinate Mg(2+): S262 and T283. K500 lines the 5,10-methylenetetrahydrofolate pocket.

Belongs to the TRAFAC class TrmE-Era-EngA-EngB-Septin-like GTPase superfamily. TrmE GTPase family. K(+) serves as cofactor.

It is found in the mitochondrion. The catalysed reaction is GTP + H2O = GDP + phosphate + H(+). GTPase component of the GTPBP3-MTO1 complex that catalyzes the 5-taurinomethyluridine (taum(5)U) modification at the 34th wobble position (U34) of mitochondrial tRNAs (mt-tRNAs), which plays a role in mt-tRNA decoding and mitochondrial translation. Taum(5)U formation on mammalian mt-tRNA requires the presence of both GTPBP3-mediated GTPase activity and MTO1 catalytic activity. The sequence is that of 5-taurinomethyluridine-[tRNA] synthase subunit GTPB3, mitochondrial (gtpbp3) from Danio rerio (Zebrafish).